Reading from the N-terminus, the 213-residue chain is Large ribosomal subunit protein uL3 (213 aa).

It belongs to the universal ribosomal protein uL3 family. In terms of assembly, part of the 50S ribosomal subunit. Forms a cluster with proteins L14 and L19.

One of the primary rRNA binding proteins, it binds directly near the 3'-end of the 23S rRNA, where it nucleates assembly of the 50S subunit. The protein is Large ribosomal subunit protein uL3 of Kosmotoga olearia (strain ATCC BAA-1733 / DSM 21960 / TBF 19.5.1).